A 145-amino-acid polypeptide reads, in one-letter code: Transcription antitermination protein NusB (145 aa).

Belongs to the NusB family.

Functionally, involved in transcription antitermination. Required for transcription of ribosomal RNA (rRNA) genes. Binds specifically to the boxA antiterminator sequence of the ribosomal RNA (rrn) operons. The protein is Transcription antitermination protein NusB of Burkholderia mallei (strain NCTC 10247).